A 154-amino-acid chain; its full sequence is Leghemoglobin-2 (154 aa).

Positions 3–151 (ALTESQAALV…LAIVIKKEMN (149 aa)) constitute a Globin domain. Position 46 (Ser-46) interacts with heme b. At Ser-46 the chain carries Phosphoserine. An O2-binding site is contributed by His-64. Heme b is bound by residues Lys-67, His-98, and Lys-101. Nitrated tyrosine is present on Tyr-139.

This sequence belongs to the plant globin family. In terms of assembly, monomer. In terms of processing, nitrated in effective nodules and particularly in hypoxic conditions; this mechanism may play a protective role in the symbiosis by buffering toxic peroxynitrite NO(2)(-). Nitration level decrease during nodule senescence. Post-translationally, phosphorylation at Ser-46 disrupts the molecular environment of its porphyrin ring oxygen binding pocket, thus leading to a reduced oxygen consumption and to the delivery of oxygen O(2) to symbiosomes. As to expression, root nodules.

The protein resides in the cytoplasm. It is found in the cytosol. It localises to the nucleus. Leghemoglobin that reversibly binds oxygen O(2) through a pentacoordinated heme iron. In root nodules, facilitates the diffusion of oxygen to the bacteroids while preventing the bacterial nitrogenase from being inactivated by buffering dioxygen, nitric oxide and carbon monoxide, and promoting the formation of reactive oxygen species (ROS, e.g. H(2)O(2)). This role is essential for symbiotic nitrogen fixation (SNF). The sequence is that of Leghemoglobin-2 from Lupinus luteus (European yellow lupine).